Here is a 101-residue protein sequence, read N- to C-terminus: Small ribosomal subunit protein uS14 (101 aa).

Residues 1–10 (MAKKSSIEKN) are compositionally biased toward basic and acidic residues. Residues 1–24 (MAKKSSIEKNNRRKRLTKNAAPKR) form a disordered region. Over residues 11–24 (NRRKRLTKNAAPKR) the composition is skewed to basic residues.

It belongs to the universal ribosomal protein uS14 family. As to quaternary structure, part of the 30S ribosomal subunit. Contacts proteins S3 and S10.

Its function is as follows. Binds 16S rRNA, required for the assembly of 30S particles and may also be responsible for determining the conformation of the 16S rRNA at the A site. In Rhodopseudomonas palustris (strain BisB18), this protein is Small ribosomal subunit protein uS14.